The chain runs to 98 residues: C-X-C motif chemokine 10 (98 aa).

The signal sequence occupies residues 1-21 (MNPSAAVVLCLVLLSLSGTQG). Arg26 carries the post-translational modification Citrulline. Cystine bridges form between Cys30–Cys57 and Cys32–Cys74.

Belongs to the intercrine alpha (chemokine CxC) family. Monomer, dimer, and tetramer. Interacts with CXCR3 (via N-terminus). As to expression, in the central nervous system, CXCL10 is predominantly localized to activated neurons. Expressed in both microglia and astrocytes.

The protein localises to the secreted. Functionally, pro-inflammatory cytokine that is involved in a wide variety of processes such as chemotaxis, differentiation, and activation of peripheral immune cells, regulation of cell growth, apoptosis and modulation of angiostatic effects. Plays thereby an important role during viral infections by stimulating the activation and migration of immune cells to the infected sites. Mechanistically, binding of CXCL10 to the CXCR3 receptor activates G protein-mediated signaling and results in downstream activation of phospholipase C-dependent pathway, an increase in intracellular calcium production and actin reorganization. In turn, recruitment of activated Th1 lymphocytes occurs at sites of inflammation. Activation of the CXCL10/CXCR3 axis also plays an important role in neurons in response to brain injury for activating microglia, the resident macrophage population of the central nervous system, and directing them to the lesion site. This recruitment is an essential element for neuronal reorganization. The chain is C-X-C motif chemokine 10 (Cxcl10) from Rattus norvegicus (Rat).